We begin with the raw amino-acid sequence, 89 residues long: uncharacterized protein (89 aa).

This is an uncharacterized protein from Dictyostelium discoideum (Social amoeba).